The primary structure comprises 184 residues: dCTP deaminase (184 aa).

Residues 107–112, 131–133, Gln152, Tyr166, and Gln176 contribute to the dCTP site; these read KSTYAR and TLE. Glu133 serves as the catalytic Proton donor/acceptor.

It belongs to the dCTP deaminase family. As to quaternary structure, homotrimer.

The enzyme catalyses dCTP + H2O + H(+) = dUTP + NH4(+). Its pathway is pyrimidine metabolism; dUMP biosynthesis; dUMP from dCTP (dUTP route): step 1/2. Its function is as follows. Catalyzes the deamination of dCTP to dUTP. In Paramagnetospirillum magneticum (strain ATCC 700264 / AMB-1) (Magnetospirillum magneticum), this protein is dCTP deaminase.